Consider the following 324-residue polypeptide: Probable acrylyl-CoA reductase AcuI (324 aa).

Residues Tyr-41, 156–159, 178–180, Arg-198, Leu-242, Ile-256, Ser-267, and Asn-313 contribute to the NADP(+) site; these read SGGV and SGR.

This sequence belongs to the zinc-containing alcohol dehydrogenase family. Acrylyl-CoA reductase subfamily. Homodimer.

The protein localises to the cytoplasm. It carries out the reaction propanoyl-CoA + NADP(+) = acryloyl-CoA + NADPH + H(+). Probably catalyzes the NADPH-dependent reduction of acrylyl-CoA to propanoyl-CoA. This is Probable acrylyl-CoA reductase AcuI (acuI) from Escherichia coli (strain K12).